The sequence spans 344 residues: Phenylalanine--tRNA ligase alpha subunit (344 aa).

Glutamate 256 contacts Mg(2+).

Belongs to the class-II aminoacyl-tRNA synthetase family. Phe-tRNA synthetase alpha subunit type 1 subfamily. As to quaternary structure, tetramer of two alpha and two beta subunits. Mg(2+) serves as cofactor.

It localises to the cytoplasm. The catalysed reaction is tRNA(Phe) + L-phenylalanine + ATP = L-phenylalanyl-tRNA(Phe) + AMP + diphosphate + H(+). This Bacillus anthracis (strain CDC 684 / NRRL 3495) protein is Phenylalanine--tRNA ligase alpha subunit.